Reading from the N-terminus, the 153-residue chain is UPF0260 protein CKO_01185 (153 aa).

It belongs to the UPF0260 family.

This Citrobacter koseri (strain ATCC BAA-895 / CDC 4225-83 / SGSC4696) protein is UPF0260 protein CKO_01185.